Consider the following 94-residue polypeptide: Aspartyl/glutamyl-tRNA(Asn/Gln) amidotransferase subunit C (94 aa).

This sequence belongs to the GatC family. Heterotrimer of A, B and C subunits.

It carries out the reaction L-glutamyl-tRNA(Gln) + L-glutamine + ATP + H2O = L-glutaminyl-tRNA(Gln) + L-glutamate + ADP + phosphate + H(+). It catalyses the reaction L-aspartyl-tRNA(Asn) + L-glutamine + ATP + H2O = L-asparaginyl-tRNA(Asn) + L-glutamate + ADP + phosphate + 2 H(+). In terms of biological role, allows the formation of correctly charged Asn-tRNA(Asn) or Gln-tRNA(Gln) through the transamidation of misacylated Asp-tRNA(Asn) or Glu-tRNA(Gln) in organisms which lack either or both of asparaginyl-tRNA or glutaminyl-tRNA synthetases. The reaction takes place in the presence of glutamine and ATP through an activated phospho-Asp-tRNA(Asn) or phospho-Glu-tRNA(Gln). This is Aspartyl/glutamyl-tRNA(Asn/Gln) amidotransferase subunit C from Caldicellulosiruptor saccharolyticus (strain ATCC 43494 / DSM 8903 / Tp8T 6331).